The sequence spans 339 residues: Glyceraldehyde-3-phosphate dehydrogenase (339 aa).

NAD(+) contacts are provided by residues 13–14, D35, and K84; that span reads RI. D-glyceraldehyde 3-phosphate is bound by residues 156–158, T187, 216–217, and R239; these read SCT and TG. The active-site Nucleophile is the C157. Position 321 (N321) interacts with NAD(+).

This sequence belongs to the glyceraldehyde-3-phosphate dehydrogenase family. Homotetramer.

It is found in the cytoplasm. The enzyme catalyses D-glyceraldehyde 3-phosphate + phosphate + NAD(+) = (2R)-3-phospho-glyceroyl phosphate + NADH + H(+). The protein operates within carbohydrate degradation; glycolysis; pyruvate from D-glyceraldehyde 3-phosphate: step 1/5. The sequence is that of Glyceraldehyde-3-phosphate dehydrogenase (G3PD) from Brugia malayi (Filarial nematode worm).